The chain runs to 558 residues: Phosphatidylserine lipase ABHD16A (558 aa).

The next 2 membrane-spanning stretches (helical) occupy residues 60-80 (ILALASVFWSISYYSSPFAFF) and 93-113 (VVPFSHYAGTLLLLLAGVACL). Residues 114–558 (RGIGRWTNPQ…AQNFQMPWHL (445 aa)) lie on the Cytoplasmic side of the membrane. The AB hydrolase-1 domain maps to 281-407 (LVICCEGNAG…LVTRTVRQHL (127 aa)). Residues Ser-355, Asp-430, and His-507 each act as charge relay system in the active site.

Belongs to the AB hydrolase superfamily. ABHD16 family.

The protein localises to the membrane. The enzyme catalyses 1-heptadecanoyl-2-(5Z,8Z,11Z,14Z-eicosatetraenoyl)-sn-glycero-3-phosphoserine + H2O = 1-heptadecanoyl-sn-glycero-3-phosphoserine + (5Z,8Z,11Z,14Z)-eicosatetraenoate + H(+). It carries out the reaction 1-hexadecanoyl-2-(9Z-octadecenoyl)-sn-glycero-3-phospho-L-serine + H2O = 1-hexadecanoyl-sn-glycero-3-phospho-L-serine + (9Z)-octadecenoate + H(+). It catalyses the reaction 1-octadecanoyl-2-(9Z,12Z-octadecadienoyl)-sn-glycero-3-phosphoserine + H2O = 1-octadecanoyl-sn-glycero-3-phosphoserine + (9Z,12Z)-octadecadienoate + H(+). The catalysed reaction is 1-heptadecanoyl-2-(5Z,8Z,11Z,14Z-eicosatetraenoyl)-sn-glycero-3-phosphocholine + H2O = 1-heptadecanoyl-sn-glycero-3-phosphocholine + (5Z,8Z,11Z,14Z)-eicosatetraenoate + H(+). The enzyme catalyses 1-hexadecanoyl-2-(9Z-octadecenoyl)-sn-glycero-3-phosphoglycerol + H2O = 1-hexadecanoyl-sn-glycero-3-phosphoglycerol + (9Z)-octadecenoate + H(+). It carries out the reaction 1-hexadecanoyl-2-(9Z-octadecenoyl)-sn-glycero-3-phospho-(1D-myo-inositol) + H2O = 1-hexadecanoyl-sn-glycero-3-phospho-(1D-myo-inositol) + (9Z)-octadecenoate + H(+). It catalyses the reaction 1-heptadecanoyl-2-(5Z,8Z,11Z,14Z-eicosatetraenoyl)-sn-glycero-3-phosphoethanolamine + H2O = 1-heptadecanoyl-sn-glycero-3-phosphoethanolamine + (5Z,8Z,11Z,14Z)-eicosatetraenoate + H(+). The catalysed reaction is 1-hexadecanoyl-2-(9Z-octadecenoyl)-sn-glycero-3-phospho-(1'-sn-glycerol) + H2O = 1-hexadecanoyl-sn-glycero-3-phospho-(1'-sn-glycerol) + (9Z)-octadecenoate + H(+). The enzyme catalyses Hydrolyzes glycerol monoesters of long-chain fatty acids.. It carries out the reaction 1-tetradecanoylglycerol + H2O = tetradecanoate + glycerol + H(+). It catalyses the reaction 2-hexadecanoylglycerol + H2O = glycerol + hexadecanoate + H(+). The catalysed reaction is 1-(9Z-octadecenoyl)-glycerol + H2O = glycerol + (9Z)-octadecenoate + H(+). The enzyme catalyses 2-(9Z-octadecenoyl)-glycerol + H2O = glycerol + (9Z)-octadecenoate + H(+). It carries out the reaction 2-(9Z,12Z-octadecadienoyl)-glycerol + H2O = (9Z,12Z)-octadecadienoate + glycerol + H(+). It catalyses the reaction 1-(5Z,8Z,11Z,14Z-eicosatetraenoyl)-glycerol + H2O = glycerol + (5Z,8Z,11Z,14Z)-eicosatetraenoate + H(+). The catalysed reaction is 2-(5Z,8Z,11Z,14Z-eicosatetraenoyl)-glycerol + H2O = glycerol + (5Z,8Z,11Z,14Z)-eicosatetraenoate + H(+). The enzyme catalyses prostaglandin D2-1-glycerol ester + H2O = prostaglandin D2 + glycerol + H(+). It carries out the reaction 2-glyceryl-15-deoxy-Delta(12,14)-prostaglandin J2 + H2O = 15-deoxy-Delta(12,14)-prostaglandin J2 + glycerol + H(+). It catalyses the reaction 1-(9Z,12Z-octadecadienoyl)-glycerol + H2O = (9Z,12Z)-octadecadienoate + glycerol + H(+). In terms of biological role, phosphatidylserine (PS) lipase that mediates the hydrolysis of phosphatidylserine to generate lysophosphatidylserine (LPS). LPS constitutes a class of signaling lipids that regulates immunological and neurological processes. Has no activity towards diacylglycerol, triacylglycerol or lysophosphatidylserine lipase. Also has monoacylglycerol lipase activity, with preference for 1-(9Z,12Z-octadecadienoyl)-glycerol (1-LG) and 2-glyceryl-15-deoxy-Delta(12,14)-prostaglandin J2 (15d-PGJ(2)-G). The polypeptide is Phosphatidylserine lipase ABHD16A (Macaca fascicularis (Crab-eating macaque)).